A 92-amino-acid polypeptide reads, in one-letter code: UPF0250 protein XCC3453 (92 aa).

This sequence belongs to the UPF0250 family.

The protein is UPF0250 protein XCC3453 of Xanthomonas campestris pv. campestris (strain ATCC 33913 / DSM 3586 / NCPPB 528 / LMG 568 / P 25).